We begin with the raw amino-acid sequence, 209 residues long: Large ribosomal subunit protein uL3 (209 aa).

Position 150 is an N5-methylglutamine (Gln150).

Belongs to the universal ribosomal protein uL3 family. As to quaternary structure, part of the 50S ribosomal subunit. Forms a cluster with proteins L14 and L19. In terms of processing, methylated by PrmB.

In terms of biological role, one of the primary rRNA binding proteins, it binds directly near the 3'-end of the 23S rRNA, where it nucleates assembly of the 50S subunit. This chain is Large ribosomal subunit protein uL3, found in Aliivibrio fischeri (strain MJ11) (Vibrio fischeri).